Here is a 1332-residue protein sequence, read N- to C-terminus: SAGA complex subunit SPT7 (1332 aa).

Residue Thr-78 is modified to Phosphothreonine; by ATM or ATR. 3 disordered regions span residues 80–118 (EEEH…ISNE), 209–268 (VEEK…ISSS), and 331–384 (IEKG…PKQS). Ser-88 carries the phosphoserine modification. Low complexity predominate over residues 106-118 (NNNTNTNTSISNE). The segment covering 217–233 (IGKNEKPQNKEGISKFA) has biased composition (basic and acidic residues). Residues 234-249 (EDEDYDDEDENYDEDS) show a composition bias toward acidic residues. Basic and acidic residues predominate over residues 250-260 (TDVKNVDDPPK). Over residues 345-360 (AATDEQDRENTNDEPD) the composition is skewed to acidic residues. The span at 362 to 376 (NQKLPTPEGSTFSDT) shows a compositional bias: polar residues. A Bromo domain is found at 440–546 (IGQEELYEAC…KKSLQLIRMI (107 aa)). A compositionally biased stretch (acidic residues) spans 566–578 (KDKDYELDEEEEV). Disordered stretches follow at residues 566 to 724 (KDKD…YLLE) and 1286 to 1332 (GAEN…RLNQ). 2 stretches are compositionally biased toward basic and acidic residues: residues 593–634 (LAKE…KDKT) and 644–697 (NVNK…KEAG). The span at 698-716 (ENNEEEEDDDDEDEDEDMV) shows a compositional bias: acidic residues. At Ser-1293 the chain carries Phosphoserine. Positions 1316–1332 (NMGSNSSFSLSLPRLNQ) are enriched in polar residues.

As to quaternary structure, component of the 1.8 MDa SAGA (Spt-Ada-Gcn5 acetyltransferase) complex, which is composed of 19 subunits TRA1, SPT7, TAF5, NGG1/ADA3, SGF73, SPT20/ADA5, SPT8, TAF12, TAF6, HFI1/ADA1, UBP8, GCN5, ADA2, SPT3, SGF29, TAF10, TAF9, SGF11 and SUS1. The SAGA complex is composed of 4 modules, namely the HAT (histone acetyltransferase) module (GCN5, ADA2, NGG1/ADA3 and SGF29), the DUB (deubiquitinating) module (UBP8, SGF11, SGF73 and SUS1), the core or TAF (TBP-associated factor) module (TAF5, TAF6, TAF9, TAF10 and TAF12), and the Tra1 or SPT (Suppressor of Ty) module (TRA1, HFI1/ADA1, SPT3, SPT7, SPT8 and SPT20/ADA5). The Tra1/SPT module binds activators, the core module recruits TBP (TATA-binding protein), the HAT module contains the histone H3 acetyltransferase GCN5, and the DUB module comprises the histone H2B deubiquitinase UBP8. Also identified in an altered form of SAGA, named SALSA (SAGA altered, Spt8 absent) or SLIK (SAGA-like) complex, which contains a C-terminal truncated form of SPT7 and is missing SPT8. However, it has been shown that the SAGA and SAGA-like SALSA/SLIK transcriptional coactivators are structurally and biochemically equivalent. Identified in the Ada.spt complex with NGG1/ADA3 and TRA1. Protease PEP4 directly cleaves the C-terminus of SPT7(SAGA) to form SPT7(SLIK) within the SAGA complex in the nucleus.

Its subcellular location is the nucleus. Its function is as follows. Component of the transcription coactivator SAGA complex. SAGA acts as a general cofactor required for essentially all RNA polymerase II transcription. At the promoters, SAGA is required for transcription pre-initiation complex (PIC) recruitment. It influences RNA polymerase II transcriptional activity through different activities such as TBP interaction (via core/TAF module) and promoter selectivity, interaction with transcription activators (via Tra1/SPT module), and chromatin modification through histone acetylation (via HAT module) and deubiquitination (via DUB module). SAGA preferentially acetylates histones H3 (to form H3K9ac, H3K14ac, H3K18ac and H3K23ac) and H2B and deubiquitinates histone H2B. SAGA interacts with DNA via upstream activating sequences (UASs). Also identified in a modified version of SAGA named SALSA or SLIK. The cleavage of SPT7 and the absence of the SPT8 subunit in SLIK neither drive any major conformational differences in its structure compared with SAGA, nor significantly affect HAT, DUB, or DNA-binding activities. This is SAGA complex subunit SPT7 (SPT7) from Saccharomyces cerevisiae (strain ATCC 204508 / S288c) (Baker's yeast).